Here is a 652-residue protein sequence, read N- to C-terminus: Endoplasmic reticulum chaperone BiP (652 aa).

A signal peptide spans 1–16 (MRHLLLALLLLGGARA). Residues 34–37 (GTTY), K94, 225–227 (GGT), 291–298 (EKAKRALS), and 362–365 (GSTR) each bind ATP. The segment at 123 to 278 (KPHIQVDVGG…KKKTGKDVRK (156 aa)) is nucleotide-binding (NBD). The interdomain linker stretch occupies residues 407–417 (QDTGDLVLLDV). Positions 418-498 (CPLTLGIETV…PRGVPQIEVT (81 aa)) are substrate-binding (SBD). A disordered region spans residues 630-652 (SKLYGSAGPPPTGEEEAAEKDEL). Positions 642–652 (GEEEAAEKDEL) are enriched in acidic residues. Positions 649–652 (KDEL) match the Prevents secretion from ER motif.

This sequence belongs to the heat shock protein 70 family. Monomer and homooligomer; homooligomerization via the interdomain linker inactivates the chaperone activity and acts as a storage of HSPA5/BiP molecules. Interacts with DNAJC10. Interacts with DNAJB9/ERdj4; leading to recruit HSPA5/BiP to ERN1/IRE1. Interacts with ERN1/IRE1; interaction takes place following interaction with DNAJB9/ERdj4 and leads to inactivate ERN1/IRE1.

It localises to the endoplasmic reticulum lumen. Its subcellular location is the melanosome. It is found in the cytoplasm. The protein localises to the cell surface. It carries out the reaction ATP + H2O = ADP + phosphate + H(+). With respect to regulation, the chaperone activity is regulated by ATP-induced allosteric coupling of the nucleotide-binding (NBD) and substrate-binding (SBD) domains. In the ADP-bound and nucleotide-free (apo) states, the two domains have little interaction. In contrast, in the ATP-bound state the two domains are tightly coupled, which results in drastically accelerated kinetics in both binding and release of polypeptide substrates. J domain-containing co-chaperones (DNAJB9/ERdj4 or DNAJC10/ERdj5) stimulate the ATPase activity and are required for efficient substrate recognition by HSPA5/BiP. Homooligomerization inactivates participating HSPA5/BiP protomers and probably act as reservoirs to store HSPA5/BiP molecules when they are not needed by the cell. Its function is as follows. Endoplasmic reticulum chaperone that plays a key role in protein folding and quality control in the endoplasmic reticulum lumen. Involved in the correct folding of proteins and degradation of misfolded proteins via its interaction with DNAJC10/ERdj5, probably to facilitate the release of DNAJC10/ERdj5 from its substrate. Acts as a key repressor of the EIF2AK3/PERK and ERN1/IRE1-mediated unfolded protein response (UPR). In the unstressed endoplasmic reticulum, recruited by DNAJB9/ERdj4 to the luminal region of ERN1/IRE1, leading to disrupt the dimerization of ERN1/IRE1, thereby inactivating ERN1/IRE1. Also binds and inactivates EIF2AK3/PERK in unstressed cells. Accumulation of misfolded protein in the endoplasmic reticulum causes release of HSPA5/BiP from ERN1/IRE1 and EIF2AK3/PERK, allowing their homodimerization and subsequent activation. May also play a role in apoptosis and cell proliferation. This Gallus gallus (Chicken) protein is Endoplasmic reticulum chaperone BiP.